Reading from the N-terminus, the 56-residue chain is uncharacterized protein (56 aa).

A disordered region spans residues 15 to 56; the sequence is SIGNISSGNINNSIGNSSSSGCDDVFNNSTNNNNNNNNNNNK.

This is an uncharacterized protein from Dictyostelium discoideum (Social amoeba).